Consider the following 501-residue polypeptide: V-type proton ATPase subunit B 2 (501 aa).

Residue R392 coordinates ATP.

The protein belongs to the ATPase alpha/beta chains family. In terms of assembly, V-ATPase is a heteromultimeric enzyme made up of two complexes: the ATP-hydrolytic V1 complex and the proton translocation V0 complex. The V1 complex consists of three catalytic AB heterodimers that form a heterohexamer, three peripheral stalks each consisting of EG heterodimers, one central rotor including subunits D and F, and the regulatory subunits C and H. The proton translocation complex V0 consists of the proton transport subunit a, a ring of proteolipid subunits c9c'', rotary subunit d, subunits e and f, and the accessory subunits vah-19/Ac45 and vah-20/PRR. Predominantly expressed in male and hermaphrodite testis (at protein level).

The protein localises to the cytoplasm. In terms of biological role, non-catalytic subunit of the V1 complex of vacuolar(H+)-ATPase (V-ATPase), a multisubunit enzyme composed of a peripheral complex (V1) that hydrolyzes ATP and a membrane integral complex (V0) that translocates protons. V-ATPase is responsible for acidifying and maintaining the pH of intracellular compartments and in some cell types, is targeted to the plasma membrane, where it is responsible for acidifying the extracellular environment. In neurons, required for necrotic cell death probably by promoting intracellular acidification. Required for spermatogenesis where it regulates the fibrous body-membranous organelle (FBMO) morphology in spermatocytes and the acidification of FBMO-derived secretory membranous organelles (MOs) as spermatids mature. The chain is V-type proton ATPase subunit B 2 from Caenorhabditis elegans.